A 410-amino-acid polypeptide reads, in one-letter code: Dephospho-CoA kinase (410 aa).

The region spanning 3 to 201 (CIGITGGIGA…HRILPFAYNL (199 aa)) is the DPCK domain. 11 to 16 (GAGKSL) provides a ligand contact to ATP. Residues 196–410 (PFAYNLSQRQ…EWADSTGWRL (215 aa)) form a UPF0157 region.

The protein in the N-terminal section; belongs to the CoaE family. It in the C-terminal section; belongs to the UPF0157 (GrpB) family.

The protein resides in the cytoplasm. It carries out the reaction 3'-dephospho-CoA + ATP = ADP + CoA + H(+). It functions in the pathway cofactor biosynthesis; coenzyme A biosynthesis; CoA from (R)-pantothenate: step 5/5. Functionally, catalyzes the phosphorylation of the 3'-hydroxyl group of dephosphocoenzyme A to form coenzyme A. The chain is Dephospho-CoA kinase from Mycobacterium leprae (strain TN).